Reading from the N-terminus, the 251-residue chain is Small ribosomal subunit protein uS2 (251 aa).

This sequence belongs to the universal ribosomal protein uS2 family.

The chain is Small ribosomal subunit protein uS2 from Azoarcus sp. (strain BH72).